Consider the following 683-residue polypeptide: Amino acid transporter heavy chain SLC3A1 (683 aa).

Basic and acidic residues predominate over residues 1 to 10 (MNEDKDKRDS). The segment at 1–50 (MNEDKDKRDSIQMSMKGCRTNNGFVQNEDIQEQDPDSRDTPQSNAVSIPA) is disordered. Residues 1-86 (MNEDKDKRDS…ARYRVPREIL (86 aa)) are Cytoplasmic-facing. A Phosphoserine modification is found at Ser-10. The chain crosses the membrane as a helical; Signal-anchor for type II membrane protein span at residues 87–107 (FWLTVVSVFLLIGATIAIIII). The Extracellular portion of the chain corresponds to 108 to 683 (SPKCLDWWQA…SVLDLLYSSC (576 aa)). Asn-211 is a Ca(2+) binding site. 3 N-linked (GlcNAc...) asparagine glycosylation sites follow: Asn-211, Asn-238, and Asn-258. An intrachain disulfide couples Cys-239 to Cys-270. Ca(2+) is bound by residues Asp-281, Phe-315, Leu-316, and Glu-318. The N-linked (GlcNAc...) asparagine glycan is linked to Asn-329. Ser-383 carries the post-translational modification Phosphoserine. N-linked (GlcNAc...) asparagine glycosylation is found at Asn-510, Asn-520, and Asn-574. 2 cysteine pairs are disulfide-bonded: Cys-568/Cys-664 and Cys-671/Cys-683.

As to quaternary structure, disulfide-linked heterodimer composed of the catalytic light subunit SLC7A9 and the heavy subunit SLC3A1. The heterodimer is the minimal functional unit. Assembles in non-covalently linked heterotetramers (dimers of heterodimers) and higher order oligomers; the oligomerization is mediated by SLC3A1 likely to prevent degradation in the endoplasmic reticulum and facilitate heteromer trafficking to the plasma membrane. Disulfide-linked heterodimer composed of the catalytic light subunit SLC7A13 and the heavy subunit SLC3A1. Predominantly expressed in kidney and intestine. In kidney localized to the apical membrane of the proximal tubules.

The protein localises to the cell membrane. Its subcellular location is the apical cell membrane. Acts as a chaperone that facilitates biogenesis and trafficking of functional transporter heteromers to the plasma membrane. Associates with SLC7A9 to form a functional transporter complex that mediates the electrogenic exchange between cationic amino acids and neutral amino acids, with a stoichiometry of 1:1. SLC7A9-SLC3A1 transporter has system b(0,+)-like activity with high affinity for extracellular cationic amino acids and L-cystine and lower affinity for intracellular neutral amino acids. Substrate exchange is driven by high concentration of intracellular neutral amino acids and the intracellular reduction of L-cystine to L-cysteine. SLC7A9-SLC3A1 acts as a major transporter for reabsorption of L-cystine and dibasic amino acids across the brush border membrane in early proximal tubules. Associates with SLC7A13 to form a functional complex that transports anionic and neutral amino acids via exchange or facilitated diffusion. SLC7A13-SLC3A1 may act as a major transporter for L-cystine in late proximal tubules, ensuring its reabsorption from the luminal fluid in exchange for cytosolic L-glutamate or L-aspartate. The protein is Amino acid transporter heavy chain SLC3A1 (Slc3a1) of Rattus norvegicus (Rat).